A 292-amino-acid polypeptide reads, in one-letter code: Ribosome-inactivating protein saporin-2 (292 aa).

Residues 1–24 (MKIYVVATIAWILLQFSAWTTTDA) form the signal peptide. Glu-200 is a catalytic residue.

It belongs to the ribosome-inactivating protein family. Type 1 RIP subfamily.

The catalysed reaction is Endohydrolysis of the N-glycosidic bond at one specific adenosine on the 28S rRNA.. Functionally, ribosome-inactivating protein of type 1, inhibits protein synthesis in animal cells. Useful as immunotoxin for pharmacological applications. In Saponaria officinalis (Common soapwort), this protein is Ribosome-inactivating protein saporin-2 (SAP2).